The sequence spans 79 residues: Exodeoxyribonuclease 7 small subunit (79 aa).

The protein belongs to the XseB family. In terms of assembly, heterooligomer composed of large and small subunits.

The protein localises to the cytoplasm. It carries out the reaction Exonucleolytic cleavage in either 5'- to 3'- or 3'- to 5'-direction to yield nucleoside 5'-phosphates.. Functionally, bidirectionally degrades single-stranded DNA into large acid-insoluble oligonucleotides, which are then degraded further into small acid-soluble oligonucleotides. The protein is Exodeoxyribonuclease 7 small subunit of Syntrophus aciditrophicus (strain SB).